The sequence spans 348 residues: MNIAVSKPPLTIRLCGPRGFCAGVDRAIQIVVLALKAYGAPVYVRHEIVHNRYVVEGLEAKGAIFVEELHEIPAEHREQPVVFSAHGVPKSVPEDAQARNLFYLDATCPLVSKVHKQAMRHQRLGRHVVLIGHAGHPEVIGTMGQLPEGTVSLVETVEDAGVYEPVDRENLGFVTQTTLSVDDTAGVIARLQERFPAIQAPAADSICYATTNRQDAVKQAAPGCDLFIVVGAPNSSNSKRLVEVALRAGAKHSVLVQRASEIDWNEIGDIRTVGLSAGASAPEVIVDEIIEAFKARFDTTLDLAVTVEETEHFLVNRELRSIELTTDDMAFVNGNASNALPPKATAGI.

C21 is a [4Fe-4S] cluster binding site. Residues H50 and H86 each contribute to the (2E)-4-hydroxy-3-methylbut-2-enyl diphosphate site. Residues H50 and H86 each contribute to the dimethylallyl diphosphate site. Isopentenyl diphosphate is bound by residues H50 and H86. A [4Fe-4S] cluster-binding site is contributed by C108. Position 136 (H136) interacts with (2E)-4-hydroxy-3-methylbut-2-enyl diphosphate. Dimethylallyl diphosphate is bound at residue H136. H136 contributes to the isopentenyl diphosphate binding site. Residue E138 is the Proton donor of the active site. A (2E)-4-hydroxy-3-methylbut-2-enyl diphosphate-binding site is contributed by T177. Residue C207 participates in [4Fe-4S] cluster binding. S235, S236, N237, and S280 together coordinate (2E)-4-hydroxy-3-methylbut-2-enyl diphosphate. S235, S236, N237, and S280 together coordinate dimethylallyl diphosphate. Positions 235, 236, 237, and 280 each coordinate isopentenyl diphosphate.

Belongs to the IspH family. [4Fe-4S] cluster is required as a cofactor.

The catalysed reaction is isopentenyl diphosphate + 2 oxidized [2Fe-2S]-[ferredoxin] + H2O = (2E)-4-hydroxy-3-methylbut-2-enyl diphosphate + 2 reduced [2Fe-2S]-[ferredoxin] + 2 H(+). It carries out the reaction dimethylallyl diphosphate + 2 oxidized [2Fe-2S]-[ferredoxin] + H2O = (2E)-4-hydroxy-3-methylbut-2-enyl diphosphate + 2 reduced [2Fe-2S]-[ferredoxin] + 2 H(+). Its pathway is isoprenoid biosynthesis; dimethylallyl diphosphate biosynthesis; dimethylallyl diphosphate from (2E)-4-hydroxy-3-methylbutenyl diphosphate: step 1/1. It participates in isoprenoid biosynthesis; isopentenyl diphosphate biosynthesis via DXP pathway; isopentenyl diphosphate from 1-deoxy-D-xylulose 5-phosphate: step 6/6. Functionally, catalyzes the conversion of 1-hydroxy-2-methyl-2-(E)-butenyl 4-diphosphate (HMBPP) into a mixture of isopentenyl diphosphate (IPP) and dimethylallyl diphosphate (DMAPP). Acts in the terminal step of the DOXP/MEP pathway for isoprenoid precursor biosynthesis. The protein is 4-hydroxy-3-methylbut-2-enyl diphosphate reductase of Agrobacterium fabrum (strain C58 / ATCC 33970) (Agrobacterium tumefaciens (strain C58)).